Reading from the N-terminus, the 181-residue chain is Proteinase inhibitor B (181 aa).

The N-terminal stretch at M1–G24 is a signal peptide. Intrachain disulfides connect C67–C113, C134–C143, and C136–C139.

It belongs to the protease inhibitor I3 (leguminous Kunitz-type inhibitor) family.

The protein resides in the secreted. Possesses two reactive sites. Inhibits two molecules of trypsin simultaneously. Inhibits efficiently kallikrein, but chymotrypsin weakly. The protein is Proteinase inhibitor B of Sagittaria sagittifolia (Arrowhead).